The chain runs to 96 residues: Co-chaperonin GroES (96 aa).

Belongs to the GroES chaperonin family. In terms of assembly, heptamer of 7 subunits arranged in a ring. Interacts with the chaperonin GroEL.

The protein localises to the cytoplasm. In terms of biological role, together with the chaperonin GroEL, plays an essential role in assisting protein folding. The GroEL-GroES system forms a nano-cage that allows encapsulation of the non-native substrate proteins and provides a physical environment optimized to promote and accelerate protein folding. GroES binds to the apical surface of the GroEL ring, thereby capping the opening of the GroEL channel. This chain is Co-chaperonin GroES, found in Geobacter sp. (strain M21).